An 84-amino-acid chain; its full sequence is Small ribosomal subunit protein uS17 (84 aa).

It belongs to the universal ribosomal protein uS17 family. In terms of assembly, part of the 30S ribosomal subunit.

In terms of biological role, one of the primary rRNA binding proteins, it binds specifically to the 5'-end of 16S ribosomal RNA. This Buchnera aphidicola subsp. Cinara cedri (strain Cc) protein is Small ribosomal subunit protein uS17.